We begin with the raw amino-acid sequence, 322 residues long: Acetyl-coenzyme A carboxylase carboxyl transferase subunit alpha 2 (322 aa).

Positions 37 to 294 constitute a CoA carboxyltransferase C-terminal domain; it reads EINRLSARSE…KRVLQESLRN (258 aa).

Belongs to the AccA family. In terms of assembly, acetyl-CoA carboxylase is a heterohexamer composed of biotin carboxyl carrier protein (AccB), biotin carboxylase (AccC) and two subunits each of ACCase subunit alpha (AccA) and ACCase subunit beta (AccD).

The protein localises to the cytoplasm. The catalysed reaction is N(6)-carboxybiotinyl-L-lysyl-[protein] + acetyl-CoA = N(6)-biotinyl-L-lysyl-[protein] + malonyl-CoA. It participates in lipid metabolism; malonyl-CoA biosynthesis; malonyl-CoA from acetyl-CoA: step 1/1. Its function is as follows. Component of the acetyl coenzyme A carboxylase (ACC) complex. First, biotin carboxylase catalyzes the carboxylation of biotin on its carrier protein (BCCP) and then the CO(2) group is transferred by the carboxyltransferase to acetyl-CoA to form malonyl-CoA. Functionally, confers resistance to the endogenous polyketide antibiotic thailandamide. Can replace the endogenous gene in S.typhimurium, conferring slow growth and resistance to thailandamide. Can also replace the endogenous gene in E.coli, conferring resistance to thailandamide. This chain is Acetyl-coenzyme A carboxylase carboxyl transferase subunit alpha 2, found in Burkholderia thailandensis (strain ATCC 700388 / DSM 13276 / CCUG 48851 / CIP 106301 / E264).